We begin with the raw amino-acid sequence, 253 residues long: Sulfur carrier protein FdhD (253 aa).

C100 functions as the Cysteine persulfide intermediate in the catalytic mechanism.

This sequence belongs to the FdhD family.

It is found in the cytoplasm. In terms of biological role, required for formate dehydrogenase (FDH) activity. Acts as a sulfur carrier protein that transfers sulfur from IscS to the molybdenum cofactor prior to its insertion into FDH. The polypeptide is Sulfur carrier protein FdhD (Sulfolobus acidocaldarius (strain ATCC 33909 / DSM 639 / JCM 8929 / NBRC 15157 / NCIMB 11770)).